Consider the following 185-residue polypeptide: Elongation factor P (185 aa).

This sequence belongs to the elongation factor P family.

It localises to the cytoplasm. It participates in protein biosynthesis; polypeptide chain elongation. In terms of biological role, involved in peptide bond synthesis. Stimulates efficient translation and peptide-bond synthesis on native or reconstituted 70S ribosomes in vitro. Probably functions indirectly by altering the affinity of the ribosome for aminoacyl-tRNA, thus increasing their reactivity as acceptors for peptidyl transferase. The chain is Elongation factor P from Herpetosiphon aurantiacus (strain ATCC 23779 / DSM 785 / 114-95).